The primary structure comprises 226 residues: Peptidyl-prolyl cis-trans isomerase CYP23 (226 aa).

A signal peptide spans 1–22 (MGITRNLILGLACLAFVSIAKA). The PPIase cyclophilin-type domain occupies 34-191 (VVFQTSYGDI…ERITILSTYY (158 aa)).

Belongs to the cyclophilin-type PPIase family. Ubiquitous. Lower expression in roots.

It localises to the endoplasmic reticulum. The catalysed reaction is [protein]-peptidylproline (omega=180) = [protein]-peptidylproline (omega=0). In terms of biological role, PPIases accelerate the folding of proteins. It catalyzes the cis-trans isomerization of proline imidic peptide bonds in oligopeptides. The polypeptide is Peptidyl-prolyl cis-trans isomerase CYP23 (CYP23) (Arabidopsis thaliana (Mouse-ear cress)).